The primary structure comprises 360 residues: Decorin (360 aa).

The first 16 residues, 1–16 (MKATIIFFLVAQVSWA), serve as a signal peptide directing secretion. Positions 17-30 (GPFQQKGLFDFMLE) are excised as a propeptide. The O-linked (Xyl...) (glycosaminoglycan) serine glycan is linked to serine 34. Cystine bridges form between cysteine 55/cysteine 61 and cysteine 59/cysteine 68. 12 LRR repeats span residues 74–94 (EKVP…NNKI), 95–118 (TEIK…NNKI), 119–142 (SKIS…KNQL), 143–163 (KELP…ENEI), 164–187 (TKVR…TNPL), 188–213 (KSSG…DTNI), 214–234 (TTIP…GNKI), 235–258 (TKVD…FNSI), 259–282 (SAVD…NNKL), 283–305 (VKVP…NNNI), 306–335 (SAIG…SNPV), and 336–360 (QYWE…GNYK). Asparagine 212 carries N-linked (GlcNAc...) asparagine glycosylation. N-linked (GlcNAc...) asparagine glycosylation is found at asparagine 263 and asparagine 304. An intrachain disulfide couples cysteine 314 to cysteine 347.

Belongs to the small leucine-rich proteoglycan (SLRP) family. SLRP class I subfamily. As to quaternary structure, binds to type I and type II collagen, fibronectin and TGF-beta. Forms a ternary complex with MFAP2 and ELN. Interacts with DPT. Post-translationally, the attached glycosaminoglycan chain can be either chondroitin sulfate or dermatan sulfate depending upon the tissue of origin.

It is found in the secreted. The protein localises to the extracellular space. The protein resides in the extracellular matrix. Functionally, may affect the rate of fibrils formation. In Ovis aries (Sheep), this protein is Decorin (DCN).